Here is a 121-residue protein sequence, read N- to C-terminus: Parathyroid hormone-related protein (121 aa).

An N-terminal signal peptide occupies residues 1–14 (VGVFLLSYSVPSCG). Residues 15-24 (RSVEELGRRL) constitute a propeptide that is removed on maturation. The segment at 47–58 (RFFLHHLIAEIH) is important for receptor binding. The disordered stretch occupies residues 61-121 (EIRATSEVSP…PGKKKKGKPG (61 aa)). Polar residues predominate over residues 66–80 (SEVSPNSKPAPNTKN). Residues 98 to 119 (TNKVETYKEQPLKTPGKKKKGK) carry the Nuclear localization signal motif. Residues 99-108 (NKVETYKEQP) show a composition bias toward basic and acidic residues. Residues 112–121 (PGKKKKGKPG) are compositionally biased toward basic residues.

This sequence belongs to the parathyroid hormone family. As to quaternary structure, PTHrP interacts with PTH1R (via N-terminal extracellular domain).

Its subcellular location is the secreted. The protein localises to the cytoplasm. The protein resides in the nucleus. Its function is as follows. Neuroendocrine peptide which is a critical regulator of cellular and organ growth, development, migration, differentiation and survival and of epithelial calcium ion transport. Acts by binding to its receptor, PTH1R, activating G protein-coupled receptor signaling. Regulates endochondral bone development and epithelial-mesenchymal interactions during the formation of the mammary glands and teeth. Required for skeletal homeostasis. Promotes mammary mesenchyme differentiation and bud outgrowth by modulating mesenchymal cell responsiveness to BMPs. Up-regulates BMPR1A expression in the mammary mesenchyme and this increases the sensitivity of these cells to BMPs and allows them to respond to BMP4 in a paracrine and/or autocrine fashion. BMP4 signaling in the mesenchyme, in turn, triggers epithelial outgrowth and augments MSX2 expression, which causes the mammary mesenchyme to inhibit hair follicle formation within the nipple sheath. In Ovis aries (Sheep), this protein is Parathyroid hormone-related protein (PTHLH).